The chain runs to 261 residues: 3-hydroxyacyl-CoA dehydrogenase type-2 (261 aa).

An N-acetylalanine modification is found at Ala2. Residues Ser20, Leu22, and Asp41 each contribute to the NAD(+) site. Lys53 carries the post-translational modification N6-acetyllysine; alternate. N6-succinyllysine; alternate is present on Lys53. NAD(+) is bound by residues Asp64 and Val65. Lys69 carries the post-translational modification N6-acetyllysine. Cys91 provides a ligand contact to NAD(+). N6-acetyllysine is present on residues Lys99 and Lys105. Position 155 (Ser155) interacts with substrate. Residues Tyr168, Lys172, Phe201, and Thr203 each contribute to the NAD(+) site. The active-site Proton acceptor is the Tyr168. Lys212 is modified (N6-acetyllysine; alternate). Lys212 bears the N6-succinyllysine; alternate mark.

Belongs to the short-chain dehydrogenases/reductases (SDR) family. As to quaternary structure, homotetramer. Component of mitochondrial ribonuclease P, a complex composed of TRMT10C/MRPP1, HSD17B10/MRPP2 and PRORP/MRPP3. Interacts with TRMT10C/MRPP1; forming the MRPP1-MRPP2 subcomplex of the mitochondrial ribonuclease P complex. As to expression, ubiquitously expressed in normal tissues but is overexpressed in neurons affected in AD.

It is found in the mitochondrion. Its subcellular location is the mitochondrion matrix. It localises to the mitochondrion nucleoid. The enzyme catalyses a (3S)-3-hydroxyacyl-CoA + NAD(+) = a 3-oxoacyl-CoA + NADH + H(+). It carries out the reaction (2S,3S)-3-hydroxy-2-methylbutanoyl-CoA + NAD(+) = 2-methyl-3-oxobutanoyl-CoA + NADH + H(+). It catalyses the reaction testosterone + NAD(+) = androst-4-ene-3,17-dione + NADH + H(+). The catalysed reaction is 5alpha-androstane-3alpha,17beta-diol + NAD(+) = 17beta-hydroxy-5alpha-androstan-3-one + NADH + H(+). The enzyme catalyses 17beta-estradiol + NAD(+) = estrone + NADH + H(+). It carries out the reaction cholate + NAD(+) = 3alpha,12alpha-dihydroxy-7-oxo-5beta-cholanate + NADH + H(+). It catalyses the reaction (3S)-3-hydroxybutanoyl-CoA + NAD(+) = acetoacetyl-CoA + NADH + H(+). The catalysed reaction is (3S)-hydroxyoctanoyl-CoA + NAD(+) = 3-oxooctanoyl-CoA + NADH + H(+). The enzyme catalyses (3S)-hydroxyhexadecanoyl-CoA + NAD(+) = 3-oxohexadecanoyl-CoA + NADH + H(+). It carries out the reaction 17beta-hydroxy-5alpha-androstan-3-one + NAD(+) = 5alpha-androstan-3,17-dione + NADH + H(+). It catalyses the reaction 5alpha-pregnan-20beta-ol-3-one + NAD(+) = 5alpha-pregnane-3,20-dione + NADH + H(+). The catalysed reaction is 3alpha-hydroxy-5alpha-pregnan-20-one + NAD(+) = 5alpha-pregnane-3,20-dione + NADH + H(+). The enzyme catalyses cortisone + NAD(+) = 17alpha-hydroxypregn-4-en-3,11,20-trione-21-al + NADH + H(+). It carries out the reaction 11-dehydrocorticosterone + NAD(+) = pregn-4-ene-3,11,20,21-tetraone + NADH + H(+). It catalyses the reaction cortisol + NAD(+) = 11beta,17alpha-dihydroxypregn-4-ene-3,20,21-trione + NADH + H(+). The catalysed reaction is chenodeoxycholate + NAD(+) = 7-oxolithocholate + NADH + H(+). The enzyme catalyses ursodeoxycholate + NAD(+) = 7-oxolithocholate + NADH + H(+). It carries out the reaction 3beta,7beta-dihydroxy-5beta-cholan-24-oate + NAD(+) = 3beta-hydroxy-7-oxo-5beta-cholan-24-oate + NADH + H(+). It functions in the pathway amino-acid degradation; L-isoleucine degradation. Its pathway is lipid metabolism; fatty acid beta-oxidation. The protein operates within steroid metabolism. It participates in lipid metabolism; bile acid biosynthesis. The phospholipase C-like activity toward cardiolipin is inhibited by amyloid-beta peptide. Mitochondrial dehydrogenase involved in pathways of fatty acid, branched-chain amino acid and steroid metabolism. Acts as (S)-3-hydroxyacyl-CoA dehydrogenase in mitochondrial fatty acid beta-oxidation, a major degradation pathway of fatty acids. Catalyzes the third step in the beta-oxidation cycle, namely the reversible conversion of (S)-3-hydroxyacyl-CoA to 3-ketoacyl-CoA. Preferentially accepts straight medium- and short-chain acyl-CoA substrates with highest efficiency for (3S)-hydroxybutanoyl-CoA. Acts as 3-hydroxy-2-methylbutyryl-CoA dehydrogenase in branched-chain amino acid catabolic pathway. Catalyzes the oxidation of 3-hydroxy-2-methylbutanoyl-CoA into 2-methyl-3-oxobutanoyl-CoA, a step in isoleucine degradation pathway. Has hydroxysteroid dehydrogenase activity toward steroid hormones and bile acids. Catalyzes the oxidation of 3alpha-, 17beta-, 20beta- and 21-hydroxysteroids and 7alpha- and 7beta-hydroxy bile acids. Oxidizes allopregnanolone/brexanolone at the 3alpha-hydroxyl group, which is known to be critical for the activation of gamma-aminobutyric acid receptors (GABAARs) chloride channel. Has phospholipase C-like activity toward cardiolipin and its oxidized species. Likely oxidizes the 2'-hydroxyl in the head group of cardiolipin to form a ketone intermediate that undergoes nucleophilic attack by water and fragments into diacylglycerol, dihydroxyacetone and orthophosphate. Has higher affinity for cardiolipin with oxidized fatty acids and may degrade these species during the oxidative stress response to protect cells from apoptosis. By interacting with intracellular amyloid-beta, it may contribute to the neuronal dysfunction associated with Alzheimer disease (AD). Essential for structural and functional integrity of mitochondria. In terms of biological role, in addition to mitochondrial dehydrogenase activity, moonlights as a component of mitochondrial ribonuclease P, a complex that cleaves tRNA molecules in their 5'-ends. Together with TRMT10C/MRPP1, forms a subcomplex of the mitochondrial ribonuclease P, named MRPP1-MRPP2 subcomplex, which displays functions that are independent of the ribonuclease P activity. The MRPP1-MRPP2 subcomplex catalyzes the formation of N(1)-methylguanine and N(1)-methyladenine at position 9 (m1G9 and m1A9, respectively) in tRNAs; HSD17B10/MRPP2 acting as a non-catalytic subunit. The MRPP1-MRPP2 subcomplex also acts as a tRNA maturation platform: following 5'-end cleavage by the mitochondrial ribonuclease P complex, the MRPP1-MRPP2 subcomplex enhances the efficiency of 3'-processing catalyzed by ELAC2, retains the tRNA product after ELAC2 processing and presents the nascent tRNA to the mitochondrial CCA tRNA nucleotidyltransferase TRNT1 enzyme. Associates with mitochondrial DNA complexes at the nucleoids to initiate RNA processing and ribosome assembly. The protein is 3-hydroxyacyl-CoA dehydrogenase type-2 (HSD17B10) of Homo sapiens (Human).